The following is a 354-amino-acid chain: NADH-quinone oxidoreductase subunit H (354 aa).

Helical transmembrane passes span 12–32, 62–82, 89–109, 124–144, 162–182, 203–223, 239–259, 263–283, 291–311, and 326–346; these read LLGGFWPVVWNLIKIVALIAP, PWGLLTPIADAVKLIFKEIIL, GLFLLGPVMTIMPALAAWVVV, LLFLMAITSMEVYGVIIAGWA, VSYEIAMGFALVVVLMVSGTL, FLSWNWLPLFPIFIVYFISGL, EIVAGHMIEYSGMAFAMFFLA, NMILISALAVTMFLGGWLPPI, IPGWIWLGLKTFVVVTMFLWV, and LGWKIFIPITLIWLVVVGLWI.

Belongs to the complex I subunit 1 family. NDH-1 is composed of 14 different subunits. Subunits NuoA, H, J, K, L, M, N constitute the membrane sector of the complex.

The protein resides in the cell inner membrane. It catalyses the reaction a quinone + NADH + 5 H(+)(in) = a quinol + NAD(+) + 4 H(+)(out). In terms of biological role, NDH-1 shuttles electrons from NADH, via FMN and iron-sulfur (Fe-S) centers, to quinones in the respiratory chain. The immediate electron acceptor for the enzyme in this species is believed to be ubiquinone. Couples the redox reaction to proton translocation (for every two electrons transferred, four hydrogen ions are translocated across the cytoplasmic membrane), and thus conserves the redox energy in a proton gradient. This subunit may bind ubiquinone. This chain is NADH-quinone oxidoreductase subunit H, found in Methylibium petroleiphilum (strain ATCC BAA-1232 / LMG 22953 / PM1).